The chain runs to 1131 residues: Replication factor C subunit 1 (1131 aa).

4 disordered regions span residues Lys14–Lys87, Tyr92–Glu111, Ala120–Ala201, and Ala225–Ala378. Residues Gly38–Lys54 are compositionally biased toward basic and acidic residues. A Glycyl lysine isopeptide (Lys-Gly) (interchain with G-Cter in SUMO2) cross-link involves residue Lys49. The residue at position 66 (Tyr66) is a Phosphotyrosine. Phosphoserine is present on residues Ser68, Ser70, Ser72, and Ser107. Residue Thr109 is modified to Phosphothreonine. Polar residues predominate over residues Asn127 to Ser138. Ser155 is modified (phosphoserine). Thr160 and Thr162 each carry phosphothreonine. 8 positions are modified to phosphoserine: Ser163, Ser172, Ser189, Ser244, Ser250, Ser253, Ser281, and Ser309. A compositionally biased stretch (basic and acidic residues) spans Lys184–Ala201. A compositionally biased stretch (low complexity) spans Ser308–Met319. Basic and acidic residues-rich tracts occupy residues Ala334–Thr350 and Thr359–Arg373. The segment at Thr354–Lys528 is interferon-stimulated-response-element binding region. Ser365 is modified (phosphoserine). One can recognise a BRCT domain in the interval Gly399–Ala489. Positions Glu491–Lys525 are disordered. A Phosphoserine modification is found at Ser535. Gly635 to Thr642 contributes to the ATP binding site. Residues Pro1073 to Lys1131 are disordered. The span at Glu1078 to Thr1088 shows a compositional bias: acidic residues. Ser1090 carries the phosphoserine modification. Positions Lys1104–Arg1108 match the Nuclear localization signal motif. A compositionally biased stretch (basic and acidic residues) spans Ser1113–Lys1123.

This sequence belongs to the activator 1 large subunit family. As to quaternary structure, large subunit of the RFC complex, an heteropentameric complex consisting of RFC1 and four small subunits RFC2, RFC3, RFC4 and RFC5; the RFC complex interacts with PCNA and the interaction involves RFC1.

It localises to the nucleus. Its function is as follows. Subunit of the replication factor C (RFC) complex which acts during elongation of primed DNA templates by DNA polymerases delta and epsilon, and is necessary for ATP-dependent loading of proliferating cell nuclear antigen (PCNA) onto primed DNA. This subunit binds to the primer-template junction. Binds the PO-B transcription element as well as other GA rich DNA sequences. Can bind single- or double-stranded DNA. The protein is Replication factor C subunit 1 (Rfc1) of Mus musculus (Mouse).